Reading from the N-terminus, the 417-residue chain is MAERFVVTGGNRLSGEVAVGGAKNSVLKLMAATLLAEGTSTITNCPDILDVPLMAEVLRGLGATVELDGDVARITSPDEPKYDADFAAVRQFRASVCVLGPLVGRCKRARVALPGGDAIGSRPLDMHQAGLRQLGATCNIEHGCVVAQADTLRGAEIQLEFPSVGATENILMAAVVAEGVTTIHNAAREPDVVDLCTMLNQMGAQVEGAGSPTMTITGVPRLYPTEHRVIGDRIVAATWGIAAAMTRGDISVTGVDPAHLQVVLHKLHDAGATVTQTDDSFRVTQYERPKAVNVATLPFPGFPTDLQPMAIALASIADGTSMITENVFEARFRFVEEMIRLGADARTDGHHAVVRGLPQLSSAPVWCSDIRAGAGLVLAGLVADGDTEVHDVFHIDRGYPLFVENLAILGAEIERVE.

Phosphoenolpyruvate is bound at residue 23–24; that stretch reads KN. UDP-N-acetyl-alpha-D-glucosamine is bound at residue R93. D117 (proton donor) is an active-site residue. The UDP-N-acetyl-alpha-D-glucosamine site is built by D305 and V327.

Belongs to the EPSP synthase family. MurA subfamily.

It is found in the cytoplasm. It catalyses the reaction phosphoenolpyruvate + UDP-N-acetyl-alpha-D-glucosamine = UDP-N-acetyl-3-O-(1-carboxyvinyl)-alpha-D-glucosamine + phosphate. It participates in cell wall biogenesis; peptidoglycan biosynthesis. Its function is as follows. Cell wall formation. Adds enolpyruvyl to UDP-N-acetylglucosamine. The chain is UDP-N-acetylglucosamine 1-carboxyvinyltransferase from Mycolicibacterium paratuberculosis (strain ATCC BAA-968 / K-10) (Mycobacterium paratuberculosis).